The sequence spans 237 residues: UDP-2,3-diacylglucosamine hydrolase (237 aa).

Mn(2+) contacts are provided by D8, H10, D41, N78, and H113. 78 to 79 (NR) lines the substrate pocket. Substrate is bound by residues D121, S159, Q164, and H195. The Mn(2+) site is built by H195 and H197.

This sequence belongs to the LpxH family. Mn(2+) serves as cofactor.

It localises to the cell inner membrane. The catalysed reaction is UDP-2-N,3-O-bis[(3R)-3-hydroxytetradecanoyl]-alpha-D-glucosamine + H2O = 2-N,3-O-bis[(3R)-3-hydroxytetradecanoyl]-alpha-D-glucosaminyl 1-phosphate + UMP + 2 H(+). It participates in glycolipid biosynthesis; lipid IV(A) biosynthesis; lipid IV(A) from (3R)-3-hydroxytetradecanoyl-[acyl-carrier-protein] and UDP-N-acetyl-alpha-D-glucosamine: step 4/6. Hydrolyzes the pyrophosphate bond of UDP-2,3-diacylglucosamine to yield 2,3-diacylglucosamine 1-phosphate (lipid X) and UMP by catalyzing the attack of water at the alpha-P atom. Involved in the biosynthesis of lipid A, a phosphorylated glycolipid that anchors the lipopolysaccharide to the outer membrane of the cell. This chain is UDP-2,3-diacylglucosamine hydrolase, found in Chromobacterium violaceum (strain ATCC 12472 / DSM 30191 / JCM 1249 / CCUG 213 / NBRC 12614 / NCIMB 9131 / NCTC 9757 / MK).